The primary structure comprises 217 residues: Ribulose-phosphate 3-epimerase (217 aa).

Residue serine 7 participates in substrate binding. Residues histidine 32, aspartate 34, and histidine 65 each contribute to the a divalent metal cation site. Aspartate 34 acts as the Proton acceptor in catalysis. Substrate contacts are provided by residues histidine 65, glycine 141 to glycine 144, aspartate 175 to glycine 177, and glycine 197 to serine 198. An a divalent metal cation-binding site is contributed by aspartate 175. The active-site Proton donor is aspartate 175.

Belongs to the ribulose-phosphate 3-epimerase family. Requires a divalent metal cation as cofactor.

The enzyme catalyses D-ribulose 5-phosphate = D-xylulose 5-phosphate. It functions in the pathway carbohydrate degradation. Functionally, catalyzes the reversible epimerization of D-ribulose 5-phosphate to D-xylulose 5-phosphate. This Bacillus subtilis (strain 168) protein is Ribulose-phosphate 3-epimerase.